The sequence spans 361 residues: GTP 3',8-cyclase (361 aa).

The interval 1–30 (MTVTALGLPTVARSTGDGSAGASPAPADGP) is disordered. Residues 16–30 (GDGSAGASPAPADGP) show a composition bias toward low complexity. In terms of domain architecture, Radical SAM core spans 34 to 252 (TYGRAATDLR…LQQHFELTPD (219 aa)). R43 contributes to the GTP binding site. Positions 50 and 54 each coordinate [4Fe-4S] cluster. Position 56 (Y56) interacts with S-adenosyl-L-methionine. C57 is a [4Fe-4S] cluster binding site. R94 lines the GTP pocket. G98 is a binding site for S-adenosyl-L-methionine. T125 contacts GTP. S149 contributes to the S-adenosyl-L-methionine binding site. K186 is a binding site for GTP. Position 220 (M220) interacts with S-adenosyl-L-methionine. 2 residues coordinate [4Fe-4S] cluster: C288 and C291. GTP is bound at residue 293–295 (RTR). A [4Fe-4S] cluster-binding site is contributed by C305.

This sequence belongs to the radical SAM superfamily. MoaA family. As to quaternary structure, monomer and homodimer. The cofactor is [4Fe-4S] cluster.

The enzyme catalyses GTP + AH2 + S-adenosyl-L-methionine = (8S)-3',8-cyclo-7,8-dihydroguanosine 5'-triphosphate + 5'-deoxyadenosine + L-methionine + A + H(+). It functions in the pathway cofactor biosynthesis; molybdopterin biosynthesis. Its function is as follows. Catalyzes the cyclization of GTP to (8S)-3',8-cyclo-7,8-dihydroguanosine 5'-triphosphate. The polypeptide is GTP 3',8-cyclase (Mycolicibacterium smegmatis (strain ATCC 700084 / mc(2)155) (Mycobacterium smegmatis)).